The chain runs to 65 residues: MKEGIHPNYTEVTVKCLCGNTFQTRSTKPEISTEICSACHPFFTGKQKLIDTAGRVERFKRRYGM.

Zn(2+)-binding residues include Cys-16, Cys-18, Cys-36, and Cys-39.

Belongs to the bacterial ribosomal protein bL31 family. Type A subfamily. As to quaternary structure, part of the 50S ribosomal subunit. It depends on Zn(2+) as a cofactor.

Binds the 23S rRNA. The protein is Large ribosomal subunit protein bL31 of Geotalea uraniireducens (strain Rf4) (Geobacter uraniireducens).